Reading from the N-terminus, the 229-residue chain is NAD(P)H-quinone oxidoreductase subunit K, chloroplastic (229 aa).

Cys-43, Cys-44, Cys-108, and Cys-139 together coordinate [4Fe-4S] cluster.

Belongs to the complex I 20 kDa subunit family. As to quaternary structure, NDH is composed of at least 16 different subunits, 5 of which are encoded in the nucleus. The cofactor is [4Fe-4S] cluster.

It localises to the plastid. The protein resides in the chloroplast thylakoid membrane. The catalysed reaction is a plastoquinone + NADH + (n+1) H(+)(in) = a plastoquinol + NAD(+) + n H(+)(out). The enzyme catalyses a plastoquinone + NADPH + (n+1) H(+)(in) = a plastoquinol + NADP(+) + n H(+)(out). Its function is as follows. NDH shuttles electrons from NAD(P)H:plastoquinone, via FMN and iron-sulfur (Fe-S) centers, to quinones in the photosynthetic chain and possibly in a chloroplast respiratory chain. The immediate electron acceptor for the enzyme in this species is believed to be plastoquinone. Couples the redox reaction to proton translocation, and thus conserves the redox energy in a proton gradient. This chain is NAD(P)H-quinone oxidoreductase subunit K, chloroplastic, found in Aethionema grandiflorum (Persian stone-cress).